Reading from the N-terminus, the 415-residue chain is Serine hydroxymethyltransferase (415 aa).

Residues Leu-121 and 125–127 (GHL) each bind (6S)-5,6,7,8-tetrahydrofolate. Lys-230 carries the post-translational modification N6-(pyridoxal phosphate)lysine. 355–357 (SPF) is a (6S)-5,6,7,8-tetrahydrofolate binding site.

It belongs to the SHMT family. Homodimer. The cofactor is pyridoxal 5'-phosphate.

The protein resides in the cytoplasm. The catalysed reaction is (6R)-5,10-methylene-5,6,7,8-tetrahydrofolate + glycine + H2O = (6S)-5,6,7,8-tetrahydrofolate + L-serine. Its pathway is one-carbon metabolism; tetrahydrofolate interconversion. The protein operates within amino-acid biosynthesis; glycine biosynthesis; glycine from L-serine: step 1/1. Its function is as follows. Catalyzes the reversible interconversion of serine and glycine with tetrahydrofolate (THF) serving as the one-carbon carrier. This reaction serves as the major source of one-carbon groups required for the biosynthesis of purines, thymidylate, methionine, and other important biomolecules. Also exhibits THF-independent aldolase activity toward beta-hydroxyamino acids, producing glycine and aldehydes, via a retro-aldol mechanism. In Lactococcus lactis subsp. cremoris (strain MG1363), this protein is Serine hydroxymethyltransferase.